The following is a 185-amino-acid chain: Acireductone dioxygenase (185 aa).

4 residues coordinate Fe(2+): His-101, His-103, Glu-107, and His-145. His-101, His-103, Glu-107, and His-145 together coordinate Ni(2+).

This sequence belongs to the acireductone dioxygenase (ARD) family. In terms of assembly, monomer. It depends on Fe(2+) as a cofactor. Requires Ni(2+) as cofactor.

The enzyme catalyses 1,2-dihydroxy-5-(methylsulfanyl)pent-1-en-3-one + O2 = 3-(methylsulfanyl)propanoate + CO + formate + 2 H(+). The catalysed reaction is 1,2-dihydroxy-5-(methylsulfanyl)pent-1-en-3-one + O2 = 4-methylsulfanyl-2-oxobutanoate + formate + 2 H(+). It functions in the pathway amino-acid biosynthesis; L-methionine biosynthesis via salvage pathway; L-methionine from S-methyl-5-thio-alpha-D-ribose 1-phosphate: step 5/6. Functionally, catalyzes 2 different reactions between oxygen and the acireductone 1,2-dihydroxy-3-keto-5-methylthiopentene (DHK-MTPene) depending upon the metal bound in the active site. Fe-containing acireductone dioxygenase (Fe-ARD) produces formate and 2-keto-4-methylthiobutyrate (KMTB), the alpha-ketoacid precursor of methionine in the methionine recycle pathway. Ni-containing acireductone dioxygenase (Ni-ARD) produces methylthiopropionate, carbon monoxide and formate, and does not lie on the methionine recycle pathway. This Synechococcus sp. (strain RCC307) protein is Acireductone dioxygenase.